The chain runs to 396 residues: Gamma-D-glutamyl-L-diamino acid endopeptidase 1 (396 aa).

LysM domains follow at residues 1 to 45 (MDIL…RIQI) and 51 to 95 (TSYT…TIQV). The Peptidase M14 domain occupies 108–394 (QNYDYSMMMN…EALGIFLAGL (287 aa)). 2 residues coordinate Zn(2+): histidine 162 and glutamate 165. Residue aspartate 255 participates in substrate binding. Histidine 307 lines the Zn(2+) pocket. The Proton donor role is filled by tyrosine 347. The Proton donor/acceptor role is filled by glutamate 366.

It belongs to the peptidase M14 family. It depends on Zn(2+) as a cofactor.

The enzyme catalyses Hydrolysis of gamma-D-glutamyl bonds to the L-terminus (position 7) of meso-diaminopimelic acid (meso-A2pm) in 7-(L-Ala-gamma-D-Glu)-meso-A2pm and 7-(L-Ala-gamma-D-Glu)-7-(D-Ala)-meso-A2pm. It is required that the D-terminal amino and carboxy groups of meso-A2pm are unsubstituted.. In terms of biological role, an endopeptidase which hydrolyzes the gamma-D-Glu-(L)meso-diaminopimelic acid bond of L-Ala-gamma-D-Glu-(L)meso-diaminopimelic acid and L-Ala-gamma-D-Glu-(L)meso-diaminopimelic acid(L)-D-Ala peptides. It is active on spore cortex peptidoglycan. The protein is Gamma-D-glutamyl-L-diamino acid endopeptidase 1 of Lysinibacillus sphaericus (Bacillus sphaericus).